Reading from the N-terminus, the 124-residue chain is Small ribosomal subunit protein uS13 (124 aa).

Residues 95–124 (GLPVRGQRTRHNARTRKGPRKTVGAKKGKR) are disordered. Residues 101–124 (QRTRHNARTRKGPRKTVGAKKGKR) show a composition bias toward basic residues.

The protein belongs to the universal ribosomal protein uS13 family. As to quaternary structure, part of the 30S ribosomal subunit. Forms a loose heterodimer with protein S19. Forms two bridges to the 50S subunit in the 70S ribosome.

Its function is as follows. Located at the top of the head of the 30S subunit, it contacts several helices of the 16S rRNA. In the 70S ribosome it contacts the 23S rRNA (bridge B1a) and protein L5 of the 50S subunit (bridge B1b), connecting the 2 subunits; these bridges are implicated in subunit movement. Contacts the tRNAs in the A and P-sites. This chain is Small ribosomal subunit protein uS13, found in Coprothermobacter proteolyticus (strain ATCC 35245 / DSM 5265 / OCM 4 / BT).